Reading from the N-terminus, the 2475-residue chain is Gellan lyase (2475 aa).

A signal peptide spans 1-35 (MRFSWKKLVSAALVMALLVGIVYPAASGRGAVASA). The 86-residue stretch at 623-708 (APANVQVAIS…QPATATSPGE (86 aa)) folds into the Fibronectin type-III domain. The NodB homology domain occupies 1295 to 1518 (GAFSLTIDDN…RDQIWVGRYG (224 aa)). The Cohesin domain maps to 2111–2223 (QPGQQLELTV…VSTAVSLSDF (113 aa)).

Subject to proteolytic processing after secretion. Cleavage occurs between Gly-1205 and Leu-1206. This gives rise to a N-terminal gellan lyase of 130 kDa being the mature form of the gellan lyase. The function of C-terminal gellan lyase is not known.

It is found in the secreted. It carries out the reaction Eliminative cleavage of beta-D-glucopyranosyl-(1-&gt;4)-beta-D-glucopyranosyluronate bonds of gellan backbone releasing tetrasaccharides containing a 4-deoxy-4,5-unsaturated D-glucopyranosyluronic acid at the non-reducing end. The tetrasaccharide produced from deacetylated gellan is beta-D-4-deoxy-Delta(4)-GlcAp-(1-&gt;4)-beta-D-Glcp-(1-&gt;4)-alpha-L-Rhap-(1-&gt;3)-beta-D-Glcp.. Functionally, cleaves the glycosidic bonds of gellan backbone and releases tetrasaccharide units of glucuronyl-glucosyl-rhamnosyl-glucose with unsaturated glucuronic acid at the non-reducing terminal. The enzyme is highly specific to the heteropolysaccharide gellan, especially deacetylated gellan. The polypeptide is Gellan lyase (Bacillus sp).